The chain runs to 256 residues: 1-(5-phosphoribosyl)-5-[(5-phosphoribosylamino)methylideneamino] imidazole-4-carboxamide isomerase (256 aa).

Asp8 (proton acceptor) is an active-site residue. Asp129 serves as the catalytic Proton donor.

Belongs to the HisA/HisF family.

It localises to the cytoplasm. The catalysed reaction is 1-(5-phospho-beta-D-ribosyl)-5-[(5-phospho-beta-D-ribosylamino)methylideneamino]imidazole-4-carboxamide = 5-[(5-phospho-1-deoxy-D-ribulos-1-ylimino)methylamino]-1-(5-phospho-beta-D-ribosyl)imidazole-4-carboxamide. The protein operates within amino-acid biosynthesis; L-histidine biosynthesis; L-histidine from 5-phospho-alpha-D-ribose 1-diphosphate: step 4/9. The protein is 1-(5-phosphoribosyl)-5-[(5-phosphoribosylamino)methylideneamino] imidazole-4-carboxamide isomerase of Synechococcus sp. (strain WH7803).